A 230-amino-acid chain; its full sequence is CASP-like protein 2A2 (230 aa).

The tract at residues 1–23 (MEKKDEGNPPMAVMGSRDENEDV) is disordered. The Cytoplasmic segment spans residues 1-29 (MEKKDEGNPPMAVMGSRDENEDVKSTMRT). The chain crosses the membrane as a helical span at residues 30–50 (AETMLRLVPVALCVSALVVML). Topologically, residues 51–71 (KNTQTNDYGSLSYSDLGAFRY) are extracellular. The chain crosses the membrane as a helical span at residues 72–92 (LVNANGICAGYSLLSAVIVAM). The Cytoplasmic portion of the chain corresponds to 93 to 100 (PRAWTMPQ). A helical transmembrane segment spans residues 101 to 121 (AWTFFLLDQVLTYVILAAGTV). Residues 122–151 (STEVLYLANKGDTSIAWSAACASFGGFCHK) are Extracellular-facing. The chain crosses the membrane as a helical span at residues 152-172 (ALISTVITFVAVIFYAALSLV). The Cytoplasmic segment spans residues 173–230 (SSYKLFSKYDAPVVTQSGEGIKTVTLGSPPPPPPPPPSNLHLHLHAKLACPAHNNSPN).

It belongs to the Casparian strip membrane proteins (CASP) family. As to quaternary structure, homodimer and heterodimers.

The protein resides in the cell membrane. The polypeptide is CASP-like protein 2A2 (Populus trichocarpa (Western balsam poplar)).